The following is a 534-amino-acid chain: GTPase Obg (534 aa).

An Obg domain is found at 2 to 159 (ASFVDRVVLH…SDIVLELKSI (158 aa)). A disordered region spans residues 63 to 82 (APHRHASNGGQGMGDWRGGK). Residues 71-82 (GGQGMGDWRGGK) show a composition bias toward gly residues. In terms of domain architecture, OBG-type G spans 160-343 (ADIALVGFPS…LSFAMAELVT (184 aa)). GTP-binding positions include 166 to 173 (GFPSAGKS), 191 to 195 (FTTLI), 212 to 215 (DVPG), 295 to 298 (NKID), and 324 to 326 (SAS). The Mg(2+) site is built by serine 173 and threonine 193. An OCT domain is found at 363-449 (PRAVNRKEFT…ENAVVFDWEP (87 aa)). The disordered stretch occupies residues 456 to 534 (ELLSGPRGTD…AASTDDGDAL (79 aa)). Basic and acidic residues-rich tracts occupy residues 464 to 504 (TDPR…ERKA) and 512 to 526 (SARR…REAA).

This sequence belongs to the TRAFAC class OBG-HflX-like GTPase superfamily. OBG GTPase family. Monomer. It depends on Mg(2+) as a cofactor.

It is found in the cytoplasm. Functionally, an essential GTPase which binds GTP, GDP and possibly (p)ppGpp with moderate affinity, with high nucleotide exchange rates and a fairly low GTP hydrolysis rate. Plays a role in control of the cell cycle, stress response, ribosome biogenesis and in those bacteria that undergo differentiation, in morphogenesis control. The polypeptide is GTPase Obg (Renibacterium salmoninarum (strain ATCC 33209 / DSM 20767 / JCM 11484 / NBRC 15589 / NCIMB 2235)).